We begin with the raw amino-acid sequence, 146 residues long: Protein disulfide-isomerase 5-1 (146 aa).

The first 25 residues, 1–25 (MTLGARLVAPMIILLLFIPIELVKA), serve as a signal peptide directing secretion. The 108-residue stretch at 26–133 (EVITLTPETF…LKAFVVEETE (108 aa)) folds into the Thioredoxin domain. Residues cysteine 55 and cysteine 58 each act as nucleophile in the active site. A disulfide bridge links cysteine 55 with cysteine 58.

This sequence belongs to the protein disulfide isomerase family.

Its function is as follows. Acts as a protein-folding catalyst that interacts with nascent polypeptides to catalyze the formation, isomerization, and reduction or oxidation of disulfide bonds. This Arabidopsis thaliana (Mouse-ear cress) protein is Protein disulfide-isomerase 5-1 (PDIL5-1).